Here is a 245-residue protein sequence, read N- to C-terminus: Uroporphyrinogen-III C-methyltransferase (245 aa).

S-adenosyl-L-homocysteine contacts are provided by residues Pro12, 87 to 89 (GGD), 117 to 118 (TA), Met168, Ala197, and Ala225.

The protein belongs to the precorrin methyltransferase family.

The enzyme catalyses uroporphyrinogen III + 2 S-adenosyl-L-methionine = precorrin-2 + 2 S-adenosyl-L-homocysteine + H(+). Its pathway is cofactor biosynthesis; adenosylcobalamin biosynthesis; precorrin-2 from uroporphyrinogen III: step 1/1. The protein operates within porphyrin-containing compound metabolism; siroheme biosynthesis; precorrin-2 from uroporphyrinogen III: step 1/1. Catalyzes the two successive C-2 and C-7 methylation reactions involved in the conversion of uroporphyrinogen III to precorrin-2 via the intermediate formation of precorrin-1. It is a step in the biosynthesis of both cobalamin (vitamin B12) and siroheme. The polypeptide is Uroporphyrinogen-III C-methyltransferase (cobA) (Pseudomonas aeruginosa (strain ATCC 15692 / DSM 22644 / CIP 104116 / JCM 14847 / LMG 12228 / 1C / PRS 101 / PAO1)).